The following is a 91-amino-acid chain: MYNSSIHTPEYDVIIHVIEHLKHHKQCVQTVTSGMVFTSPVSSSICTKSDDGRNLSDGFLLIRYITTDDFCTIFDIIPRHIFYQLANVDEH.

This is an uncharacterized protein from Vaccinia virus (strain Copenhagen) (VACV).